The chain runs to 226 residues: Ribonuclease 3 (226 aa).

Residues 6–128 enclose the RNase III domain; it reads INRLQRKLGY…LIGGVFLDSD (123 aa). E41 provides a ligand contact to Mg(2+). D45 is a catalytic residue. D114 and E117 together coordinate Mg(2+). Residue E117 is part of the active site. The 71-residue stretch at 155 to 225 folds into the DRBM domain; the sequence is DPKTRLQEYL…AEQALKKLEL (71 aa).

Belongs to the ribonuclease III family. In terms of assembly, homodimer. It depends on Mg(2+) as a cofactor.

The protein resides in the cytoplasm. The catalysed reaction is Endonucleolytic cleavage to 5'-phosphomonoester.. In terms of biological role, digests double-stranded RNA. Involved in the processing of primary rRNA transcript to yield the immediate precursors to the large and small rRNAs (23S and 16S). Processes some mRNAs, and tRNAs when they are encoded in the rRNA operon. Processes pre-crRNA and tracrRNA of type II CRISPR loci if present in the organism. The polypeptide is Ribonuclease 3 (Klebsiella pneumoniae (strain 342)).